The sequence spans 108 residues: uncharacterized protein (108 aa).

This is an uncharacterized protein from Autographa californica nuclear polyhedrosis virus (AcMNPV).